The sequence spans 426 residues: Methylamine dehydrogenase heavy chain (426 aa).

Positions 1–31 are cleaved as a signal peptide; sequence MASARESTPRYLTLIGATLACSALALGAAQA. Residues 32–64 are disordered; the sequence is QTEPAEPEAPAETAAADAAGQTEGQRGAAEAAA. A disulfide bond links Cys-221 and Cys-236.

This sequence belongs to the aromatic amine dehydrogenase heavy chain family. In terms of assembly, tetramer of two light and two heavy chains.

It localises to the periplasm. It carries out the reaction 2 oxidized [amicyanin] + methylamine + H2O = 2 reduced [amicyanin] + formaldehyde + NH4(+) + 2 H(+). Its function is as follows. Methylamine dehydrogenase carries out the oxidation of methylamine. Electrons are passed from methylamine dehydrogenase to amicyanin. The chain is Methylamine dehydrogenase heavy chain (mauB) from Paracoccus versutus (Thiobacillus versutus).